The chain runs to 1040 residues: BEM1-interacting protein 2 (1040 aa).

A disordered region spans residues 1–39; that stretch reads MSNDREVPTLSQLNTTVSRDKDVSDTLSPDFDSKGSATG. Positions 8-17 are enriched in polar residues; it reads PTLSQLNTTV. Phosphoserine is present on residues Ser18, Ser24, and Ser28. In terms of domain architecture, SH3 spans 43–107; sequence GNFPMYIAIN…PVVFTQKITV (65 aa). One can recognise an SAM domain in the interval 266–330; sequence WSPEEITAYF…FKEIEKIKEA (65 aa). Disordered stretches follow at residues 365 to 412, 437 to 478, and 491 to 744; these read YRGH…SQEA, VSPR…WQSP, and IDQY…ARPV. The segment covering 372–397 has biased composition (polar residues); the sequence is TSQSLEDLPSQQNFIPTPRNTRNSSA. Pro residues predominate over residues 444-457; that stretch reads KPPSYPSPAQPPKS. Ser450 carries the phosphoserine modification. Polar residues predominate over residues 459-478; that stretch reads LLNNTRTSPSPAQLYSWQSP. Residues 495–505 show a composition bias toward low complexity; that stretch reads SSSDSNFNSRS. Phosphoserine is present on residues Ser519, Ser523, and Ser546. A compositionally biased stretch (basic and acidic residues) spans 557–570; that stretch reads SSDRKSSCSSHEEE. Residues 573 to 598 are compositionally biased toward polar residues; sequence QETMNTFERPTSSIYADGSTIASISN. A compositionally biased stretch (basic and acidic residues) spans 600–609; that stretch reads KLAHEKEGKK. Residues 632 to 648 are compositionally biased toward low complexity; sequence LKRSSSASRTSSFKKSS. At Ser652 the chain carries Phosphoserine. Residues 654–684 are compositionally biased toward polar residues; it reads FRQQFTDNAARSSSPEENPITSMPSEKNSSP. Basic residues predominate over residues 690–701; that stretch reads SSKKSRSKRRSV. The span at 702-732 shows a compositional bias: basic and acidic residues; it reads SAKEAEIFTETVKDDKNKRSASEAIKGETLK. Residues 768 to 887 form the PH domain; that stretch reads DADFSGWMSK…WMAALIKTTI (120 aa). Residues 943–957 show a composition bias toward low complexity; the sequence is QLQQQQHDNNQGQAD. Disordered regions lie at residues 943–986 and 1007–1040; these read QLQQ…NNTT and VARN…TDKI. Residues 973–986 show a composition bias toward polar residues; that stretch reads TISTPNLSSANNTT. Basic and acidic residues predominate over residues 1015 to 1024; it reads GTEKKGKFST.

As to quaternary structure, interacts with BEM1. Interacts with TOS7.

Its subcellular location is the bud. The protein resides in the bud neck. Its function is as follows. Protein involved in bud formation. Functions redundantly with BOI1 to promote the fusion of secretory vesicles with the plasma membrane at sites of polarized growth. Acts as an abscission inhibitor during cytokinesis in response to chromatin bridges. The polypeptide is BEM1-interacting protein 2 (Saccharomyces cerevisiae (strain ATCC 204508 / S288c) (Baker's yeast)).